A 154-amino-acid chain; its full sequence is 6,7-dimethyl-8-ribityllumazine synthase (154 aa).

5-amino-6-(D-ribitylamino)uracil-binding positions include 22-23 (FN), 56-58 (AFE), and 80-82 (TVI). 85–86 (AT) lines the (2S)-2-hydroxy-3-oxobutyl phosphate pocket. The Proton donor role is filled by histidine 88. Phenylalanine 113 serves as a coordination point for 5-amino-6-(D-ribitylamino)uracil. Position 127 (arginine 127) interacts with (2S)-2-hydroxy-3-oxobutyl phosphate.

Belongs to the DMRL synthase family. As to quaternary structure, forms an icosahedral capsid composed of 60 subunits, arranged as a dodecamer of pentamers. Can interact with riboflavin synthase, forming a lumazine synthase/riboflavin synthase complex, also designated as 'heavy riboflavin synthase complex', which consists of a trimer of riboflavin synthase enclosed within the icosahedral structure composed of 60 subunits of 6,7-dimethyl-8-ribityllumazine synthase.

It catalyses the reaction (2S)-2-hydroxy-3-oxobutyl phosphate + 5-amino-6-(D-ribitylamino)uracil = 6,7-dimethyl-8-(1-D-ribityl)lumazine + phosphate + 2 H2O + H(+). It functions in the pathway cofactor biosynthesis; riboflavin biosynthesis; riboflavin from 2-hydroxy-3-oxobutyl phosphate and 5-amino-6-(D-ribitylamino)uracil: step 1/2. In terms of biological role, catalyzes the formation of 6,7-dimethyl-8-ribityllumazine by condensation of 5-amino-6-(D-ribitylamino)uracil with 3,4-dihydroxy-2-butanone 4-phosphate. This is the penultimate step in the biosynthesis of riboflavin. Is able to use the non-natural R enantiomer of 3,4-dihydroxy-2-butanone 4-phosphate as a substrate, but with less efficiency than the natural S enantiomer. Cannot use unphosphorylated 3,4-dihydroxy-2-butanone, 3,4-dihydroxy-2-butanone 3-phosphate or diacetyl as substrates. The polypeptide is 6,7-dimethyl-8-ribityllumazine synthase (ribH) (Bacillus subtilis (strain 168)).